Reading from the N-terminus, the 544-residue chain is MKCSTFSFWFVCKIIFFFFSFNIQTSIANPRENFLKCFSQYIPNNATNLKLVYTQNNPLYMSVLNSTIHNLRFTSDTTPKPLVIVTPSHVSHIQGTILCSKKVGLQIRTRSGGHDSEGMSYISQVPFVIVDLRNMRSIKIDVHSQTAWVEAGATLGEVYYWVNEKNENLSLAAGYCPTVCAGGHFGGGGYGPLMRNYGLAADNIIDAHLVNVHGKVLDRKSMGEDLFWALRGGGAESFGIIVAWKIRLVAVPKSTMFSVKKIMEIHELVKLVNKWQNIAYKYDKDLLLMTHFITRNITDNQGKNKTAIHTYFSSVFLGGVDSLVDLMNKSFPELGIKKTDCRQLSWIDTIIFYSGVVNYDTDNFNKEILLDRSAGQNGAFKIKLDYVKKPIPESVFVQILEKLYEEDIGAGMYALYPYGGIMDEISESAIPFPHRAGILYELWYICSWEKQEDNEKHLNWIRNIYNFMTPYVSKNPRLAYLNYRDLDIGINDPKNPNNYTQARIWGEKYFGKNFDRLVKVKTLVDPNNFFRNEQSIPPLPRHRH.

The first 28 residues, 1–28 (MKCSTFSFWFVCKIIFFFFSFNIQTSIA), serve as a signal peptide directing secretion. Cys37 and Cys99 are oxidised to a cystine. N-linked (GlcNAc...) asparagine glycans are attached at residues Asn45 and Asn65. The FAD-binding PCMH-type domain maps to 77–251 (TTPKPLVIVT…VAWKIRLVAV (175 aa)). FAD contacts are provided by residues 109-115 (TRSGGHD) and Ser120. Positions 114–176 (HDSEGMSYIS…ENLSLAAGYC (63 aa)) form a cross-link, 6-(S-cysteinyl)-8alpha-(pros-histidyl)-FAD (His-Cys). A glycan (N-linked (GlcNAc...) asparagine) is linked at Asn168. FAD-binding positions include Cys176, 180–184 (CAGGH), Tyr190, Glu236, and Ile241. Residue His291 coordinates cannabigerolate. N-linked (GlcNAc...) asparagine glycosylation is found at Asn296, Asn304, and Asn328. Cannabigerolate is bound by residues Tyr416 and Glu441. 480–482 (YLN) contributes to the FAD binding site. The active-site Proton acceptor is the Tyr483. An N-linked (GlcNAc...) asparagine glycan is attached at Asn498.

The protein belongs to the oxygen-dependent FAD-linked oxidoreductase family. As to quaternary structure, monomer. FAD serves as cofactor. Glycosylated. In terms of processing, the FAD cofactor is bound via a bicovalent 6-S-cysteinyl, 8alpha-N1-histidyl FAD linkage. Expressed in young leaves.

Its subcellular location is the secreted. The protein resides in the extracellular space. It localises to the apoplast. The catalysed reaction is cannabigerolate + O2 = cannabidiolate + H2O2. Its pathway is secondary metabolite biosynthesis; terpenoid biosynthesis. Its activity is regulated as follows. Inhibited by Hg(2+). Oxidoreductase involved in the biosynthesis of cannabinoids-related terpenophenolic natural products, which have pharmacological activity. Catalyzes the stereoselective oxidative cyclization of the monoterpene moiety in cannabigerolic acid (CBGA), producing cannabidiolate (CBDA), the major cannabioid in fiber-type Cannabis plants. Can also use cannabinerolic acid as substrate, but not cannabigerol or cannabinerol. This chain is Cannabidiolic acid synthase, found in Cannabis sativa (Hemp).